Here is a 1061-residue protein sequence, read N- to C-terminus: DNA primase TraC (1061 aa).

A Toprim domain is found at 850–938; the sequence is PALVIGEGYA…GKAIFPIFAP (89 aa). The disordered stretch occupies residues 1034 to 1061; that stretch reads EGQRQKVQQLKQQDIEQQEQRQRRARTY.

In terms of biological role, required for autonomous replication in E.coli. Transferred into the recipient cell during bacterial conjugation. Catalyzes the synthesis of short oligoribonucleotide primers with CpA or pCpA at their 5'-termini on a single-stranded template DNA. The sequence is that of DNA primase TraC (traC) from Escherichia coli.